The following is a 181-amino-acid chain: ATP synthase subunit delta (181 aa).

This sequence belongs to the ATPase delta chain family. As to quaternary structure, F-type ATPases have 2 components, F(1) - the catalytic core - and F(0) - the membrane proton channel. F(1) has five subunits: alpha(3), beta(3), gamma(1), delta(1), epsilon(1). F(0) has three main subunits: a(1), b(2) and c(10-14). The alpha and beta chains form an alternating ring which encloses part of the gamma chain. F(1) is attached to F(0) by a central stalk formed by the gamma and epsilon chains, while a peripheral stalk is formed by the delta and b chains.

The protein localises to the cell membrane. Its function is as follows. F(1)F(0) ATP synthase produces ATP from ADP in the presence of a proton or sodium gradient. F-type ATPases consist of two structural domains, F(1) containing the extramembraneous catalytic core and F(0) containing the membrane proton channel, linked together by a central stalk and a peripheral stalk. During catalysis, ATP synthesis in the catalytic domain of F(1) is coupled via a rotary mechanism of the central stalk subunits to proton translocation. This protein is part of the stalk that links CF(0) to CF(1). It either transmits conformational changes from CF(0) to CF(1) or is implicated in proton conduction. This is ATP synthase subunit delta from Lacticaseibacillus casei (strain BL23) (Lactobacillus casei).